Here is a 506-residue protein sequence, read N- to C-terminus: Lysine--tRNA ligase (506 aa).

Glu411 and Glu418 together coordinate Mg(2+).

This sequence belongs to the class-II aminoacyl-tRNA synthetase family. In terms of assembly, homodimer. Mg(2+) serves as cofactor.

The protein resides in the cytoplasm. It carries out the reaction tRNA(Lys) + L-lysine + ATP = L-lysyl-tRNA(Lys) + AMP + diphosphate. The protein is Lysine--tRNA ligase of Thermosynechococcus vestitus (strain NIES-2133 / IAM M-273 / BP-1).